The following is a 164-amino-acid chain: MMKTVKHLLCCAIAASALISTGVHAASWKDALSSAASELGNQNSTTQEGGWSLASLTNLLSSGNQALSADNMNNAAGILQYCAKQKLASVTDAENIKNQVLEKLGLNSEEQKEDTNYLDGIQGLLKTKDGQQLNLDNIGTTPLAEKVKTKACDLVLKQGLNFIS.

The N-terminal stretch at 1-25 (MMKTVKHLLCCAIAASALISTGVHA) is a signal peptide.

This is an uncharacterized protein from Escherichia coli (strain K12).